Reading from the N-terminus, the 534-residue chain is Glycerophosphodiester transporter GIT2 (534 aa).

12 consecutive transmembrane segments (helical) span residues 63–83 (GAGL…MACL), 96–116 (AISN…LSFG), 135–155 (LIAF…QGFF), 163–183 (FCLG…ASEF), 202–222 (FMID…LWIF), 230–250 (LWRV…FIRL), 289–309 (MIWF…AIIL), 322–342 (WGWS…GAFS), 350–370 (LTLA…SACL), 377–397 (VAAF…GPGG), 417–437 (GIAA…FPAI), and 453–473 (VPFY…FFLC).

The protein belongs to the major facilitator superfamily. Sugar transporter (TC 2.A.1.1) family.

The protein localises to the cell membrane. Its function is as follows. Probable glycerophosphodiester transporter. Does not possess detectable glycerophosphoinositol (GroPIns) transport activity. Might be involved in the uptake of glycerophosphocholine (GroPCho). The expanded ability to utilize GroPIns and GroPCho results from the organism's pathogenic nature and its need to occupy a variety of environments within its host organism. This possibility is buttressed by the fact that GroPIns and GroPCho are present and abundant in human fluids. This chain is Glycerophosphodiester transporter GIT2, found in Candida albicans (strain SC5314 / ATCC MYA-2876) (Yeast).